A 150-amino-acid polypeptide reads, in one-letter code: Arginine repressor (150 aa).

It belongs to the ArgR family.

It is found in the cytoplasm. It functions in the pathway amino-acid biosynthesis; L-arginine biosynthesis [regulation]. In terms of biological role, regulates arginine biosynthesis genes. This Clostridium botulinum (strain 657 / Type Ba4) protein is Arginine repressor.